Reading from the N-terminus, the 304-residue chain is Oxygen-dependent coproporphyrinogen-III oxidase (304 aa).

Position 93 (S93) interacts with substrate. Positions 97 and 107 each coordinate a divalent metal cation. Residue H107 is the Proton donor of the active site. 109–111 serves as a coordination point for substrate; it reads NVR. Residues H146 and H176 each contribute to the a divalent metal cation site. The tract at residues 241 to 276 is important for dimerization; that stretch reads YVEFNLVYDRGTLFGLQSGGRTESILMSLPPQVRWG. Residue 259–261 coordinates substrate; sequence GGR.

The protein belongs to the aerobic coproporphyrinogen-III oxidase family. In terms of assembly, homodimer. The cofactor is a divalent metal cation.

Its subcellular location is the cytoplasm. The enzyme catalyses coproporphyrinogen III + O2 + 2 H(+) = protoporphyrinogen IX + 2 CO2 + 2 H2O. The protein operates within porphyrin-containing compound metabolism; protoporphyrin-IX biosynthesis; protoporphyrinogen-IX from coproporphyrinogen-III (O2 route): step 1/1. Its function is as follows. Involved in the heme biosynthesis. Catalyzes the aerobic oxidative decarboxylation of propionate groups of rings A and B of coproporphyrinogen-III to yield the vinyl groups in protoporphyrinogen-IX. In Pseudomonas savastanoi pv. phaseolicola (strain 1448A / Race 6) (Pseudomonas syringae pv. phaseolicola (strain 1448A / Race 6)), this protein is Oxygen-dependent coproporphyrinogen-III oxidase.